Consider the following 523-residue polypeptide: Pentatricopeptide repeat-containing protein At1g52640, mitochondrial (523 aa).

A mitochondrion-targeting transit peptide spans 1–5 (MAIRT). PPR repeat units follow at residues 101-135 (SLESYHILVEILGSSKQFALLWDFLIEAREYNYFE), 137-171 (SSKVFWIVFRAYSRANLPSEACRAFNRMVEFGIKP), 172-206 (CVDDLDQLLHSLCDKKHVNHAQEFFGKAKGFGIVP), 207-241 (SAKTYSILVRGWARIRDASGARKVFDEMLERNCVV), 242-276 (DLLAYNALLDALCKSGDVDGGYKMFQEMGNLGLKP), 277-311 (DAYSFAIFIHAYCDAGDVHSAYKVLDRMKRYDLVP), 312-346 (NVYTFNHIIKTLCKNEKVDDAYLLLDEMIQKGANP), 347-381 (DTWTYNSIMAYHCDHCEVNRATKLLSRMDRTKCLP), 382-416 (DRHTYNMVLKLLIRIGRFDRATEIWEGMSERKFYP), and 417-452 (TVATYTVMIHGLVRKKGKLEEACRYFEMMIDEGIPP). The tract at residues 498-523 (KRRRLGRRSENSEDDDDDFELERDTI) is disordered. The span at 509–523 (SEDDDDDFELERDTI) shows a compositional bias: acidic residues.

Belongs to the PPR family. P subfamily.

Its subcellular location is the mitochondrion. The sequence is that of Pentatricopeptide repeat-containing protein At1g52640, mitochondrial from Arabidopsis thaliana (Mouse-ear cress).